The following is a 749-amino-acid chain: MATKFPSFSQGLAQDPTTRRIWYGIATAHDFESHDGMTEERLYQKLFSTHFGHLAVIGLWVAGNLFHIAWQGNFEQWVADPQNVQPIAHAIWDPHFGQGITDALTQAGASRPVNICYSGLYHWWYTIGMRTNTELYQGAIFIDILVAWLLFGGWLHLQPKFRPSLAWFKNAEAMMNHHLAVLFGFTNIAWTGHLVHVAIPESRGQHVGWDNFLTVLPHPEGLTPFFTGNWGAYAQNPDSLNHAFGTSEGAGTAILTFLGGVHPQSGALWLTDISHHHIAIGVFMIIGGHMYRNSFGIGHTFKEITDGHNTNHPNDPHKDGFREKIGHYGLNHNGITDTINNSLHFQLGLALACLGTAASLVAHHMGALPSYAFIAQDYTTQAALYTHHQYIAIFLMCGAFSHGAIFFVRDYDPEANKDNVLARVLETKEALISHLSWVCMLLGFHTLALYLHNDVVIAFGTPEKQILVEPIFAQFIQAASGKVMYGLDVLLANANSAPSLAAAGMPGDHYWMDLINASPEVSNFMPIGPGDFLVHHGIALGLHTTALILIKGALDARGSKLMPDKKDFGYAFACDGPGRGGTCDISAWDSTYMAIFWALNTIAWATYYWHWKHLAAWQGNMAQFNESSTHLMGWFRDYLWINSSQIINGYNPFGINNLSPWAYMFLAGHLVWATGFMFLISWRGYWQELIETLVWAHQRSPIANLVGWRDKPVALSIVQARLVGVTHFAVGNIFTFGAFVIASTASKFG.

Helical transmembrane passes span Leu-46–Ala-69, Leu-135–Gln-158, Met-175–Ile-199, Ile-273–Tyr-291, Leu-343–Gly-366, Ala-382–Val-408, Ala-430–His-452, and Phe-532–Ile-550. [4Fe-4S] cluster-binding residues include Cys-574 and Cys-583. The next 2 membrane-spanning stretches (helical) occupy residues Ser-590 to Trp-611 and Leu-658 to Ile-680. Residues His-669, Met-677, and Tyr-685 each coordinate divinyl chlorophyll a. Trp-686 serves as a coordination point for phylloquinone. The chain crosses the membrane as a helical span at residues Leu-722–Ala-742.

Belongs to the PsaA/PsaB family. The PsaA/B heterodimer binds the P700 chlorophyll special pair and subsequent electron acceptors. PSI consists of a core antenna complex that captures photons, and an electron transfer chain that converts photonic excitation into a charge separation. The cyanobacterial PSI reaction center is composed of one copy each of PsaA,B,C,D,E,F,I,J,K,L,M and X, and forms trimeric complexes. The cofactor is PSI electron transfer chain: 5 divinyl chlorophyll a, 1 divinyl chlorophyll a', 2 phylloquinones and 3 4Fe-4S clusters. PSI core antenna: 90 divinyl chlorophyll a, 22 carotenoids, 3 phospholipids and 1 galactolipid. P700 is a divinyl chlorophyll a/divinyl chlorophyll a' dimer, A0 is one or more divinyl chlorophyll a, A1 is one or both phylloquinones and FX is a shared 4Fe-4S iron-sulfur center..

The protein resides in the cellular thylakoid membrane. It carries out the reaction reduced [plastocyanin] + hnu + oxidized [2Fe-2S]-[ferredoxin] = oxidized [plastocyanin] + reduced [2Fe-2S]-[ferredoxin]. In terms of biological role, psaA and PsaB bind P700, the primary electron donor of photosystem I (PSI), as well as the electron acceptors A0, A1 and FX. PSI is a plastocyanin/cytochrome c6-ferredoxin oxidoreductase, converting photonic excitation into a charge separation, which transfers an electron from the donor P700 chlorophyll pair to the spectroscopically characterized acceptors A0, A1, FX, FA and FB in turn. Oxidized P700 is reduced on the lumenal side of the thylakoid membrane by plastocyanin or cytochrome c6. In Prochlorococcus marinus (strain MIT 9313), this protein is Photosystem I P700 chlorophyll a apoprotein A2.